The sequence spans 61 residues: Small ribosomal subunit protein uS14 (61 aa).

The Zn(2+) site is built by cysteine 24, cysteine 27, cysteine 40, and cysteine 43.

The protein belongs to the universal ribosomal protein uS14 family. Zinc-binding uS14 subfamily. As to quaternary structure, part of the 30S ribosomal subunit. Contacts proteins S3 and S10. Zn(2+) serves as cofactor.

In terms of biological role, binds 16S rRNA, required for the assembly of 30S particles and may also be responsible for determining the conformation of the 16S rRNA at the A site. This is Small ribosomal subunit protein uS14 from Desulfitobacterium hafniense (strain Y51).